Consider the following 290-residue polypeptide: Ribosomal RNA small subunit methyltransferase A (290 aa).

S-adenosyl-L-methionine is bound by residues Asn27, Leu29, Gly54, Glu75, Asp100, and Asn125.

This sequence belongs to the class I-like SAM-binding methyltransferase superfamily. rRNA adenine N(6)-methyltransferase family. RsmA subfamily.

It is found in the cytoplasm. It catalyses the reaction adenosine(1518)/adenosine(1519) in 16S rRNA + 4 S-adenosyl-L-methionine = N(6)-dimethyladenosine(1518)/N(6)-dimethyladenosine(1519) in 16S rRNA + 4 S-adenosyl-L-homocysteine + 4 H(+). Specifically dimethylates two adjacent adenosines (A1518 and A1519) in the loop of a conserved hairpin near the 3'-end of 16S rRNA in the 30S particle. May play a critical role in biogenesis of 30S subunits. The chain is Ribosomal RNA small subunit methyltransferase A from Streptococcus pneumoniae (strain Hungary19A-6).